We begin with the raw amino-acid sequence, 545 residues long: Glucose-6-phosphate isomerase (545 aa).

The active-site Proton donor is the Glu-349. Residues His-380 and Lys-509 contribute to the active site.

This sequence belongs to the GPI family.

The protein localises to the cytoplasm. It carries out the reaction alpha-D-glucose 6-phosphate = beta-D-fructose 6-phosphate. It participates in carbohydrate biosynthesis; gluconeogenesis. The protein operates within carbohydrate degradation; glycolysis; D-glyceraldehyde 3-phosphate and glycerone phosphate from D-glucose: step 2/4. Functionally, catalyzes the reversible isomerization of glucose-6-phosphate to fructose-6-phosphate. In Chelativorans sp. (strain BNC1), this protein is Glucose-6-phosphate isomerase.